The chain runs to 260 residues: Tryptophan 2,3-dioxygenase (260 aa).

Substrate is bound by residues phenylalanine 34–histidine 38 and arginine 100. Residue histidine 219 participates in heme binding. Residue threonine 233 coordinates substrate.

Belongs to the tryptophan 2,3-dioxygenase family. As to quaternary structure, homotetramer. Heme serves as cofactor.

It catalyses the reaction L-tryptophan + O2 = N-formyl-L-kynurenine. It participates in amino-acid degradation; L-tryptophan degradation via kynurenine pathway; L-kynurenine from L-tryptophan: step 1/2. Heme-dependent dioxygenase that catalyzes the oxidative cleavage of the L-tryptophan (L-Trp) pyrrole ring and converts L-tryptophan to N-formyl-L-kynurenine. Catalyzes the oxidative cleavage of the indole moiety. The polypeptide is Tryptophan 2,3-dioxygenase (Herpetosiphon aurantiacus (strain ATCC 23779 / DSM 785 / 114-95)).